Reading from the N-terminus, the 377-residue chain is Nitric oxide reductase FlRd-NAD(+) reductase (377 aa).

Belongs to the FAD-dependent oxidoreductase family. Requires FAD as cofactor.

Its subcellular location is the cytoplasm. The catalysed reaction is 2 reduced [nitric oxide reductase rubredoxin domain] + NAD(+) + H(+) = 2 oxidized [nitric oxide reductase rubredoxin domain] + NADH. Its pathway is nitrogen metabolism; nitric oxide reduction. In terms of biological role, one of at least two accessory proteins for anaerobic nitric oxide (NO) reductase. Reduces the rubredoxin moiety of NO reductase. This Escherichia coli (strain SMS-3-5 / SECEC) protein is Nitric oxide reductase FlRd-NAD(+) reductase.